The sequence spans 180 residues: Acireductone dioxygenase (180 aa).

The Fe(2+) site is built by His99, His101, Glu105, and His145. Residues His99, His101, Glu105, and His145 each contribute to the Ni(2+) site.

The protein belongs to the acireductone dioxygenase (ARD) family. Monomer. It depends on Fe(2+) as a cofactor. Ni(2+) serves as cofactor.

It catalyses the reaction 1,2-dihydroxy-5-(methylsulfanyl)pent-1-en-3-one + O2 = 3-(methylsulfanyl)propanoate + CO + formate + 2 H(+). The catalysed reaction is 1,2-dihydroxy-5-(methylsulfanyl)pent-1-en-3-one + O2 = 4-methylsulfanyl-2-oxobutanoate + formate + 2 H(+). The protein operates within amino-acid biosynthesis; L-methionine biosynthesis via salvage pathway; L-methionine from S-methyl-5-thio-alpha-D-ribose 1-phosphate: step 5/6. Its function is as follows. Catalyzes 2 different reactions between oxygen and the acireductone 1,2-dihydroxy-3-keto-5-methylthiopentene (DHK-MTPene) depending upon the metal bound in the active site. Fe-containing acireductone dioxygenase (Fe-ARD) produces formate and 2-keto-4-methylthiobutyrate (KMTB), the alpha-ketoacid precursor of methionine in the methionine recycle pathway. Ni-containing acireductone dioxygenase (Ni-ARD) produces methylthiopropionate, carbon monoxide and formate, and does not lie on the methionine recycle pathway. This Geobacillus kaustophilus (strain HTA426) protein is Acireductone dioxygenase.